The primary structure comprises 434 residues: MAMKFDVVIIGGGLAGLTCGIMLQQKGKCCAIINNGQSAMNFSSGSMDLLSQLPNGEKINSFEQGYDSLEEQLPNHPYCLFGKQHVLQKAKQFEQLIEKINLNVTGSYKQNHFRVTPLGGLHRTWLSADCIPTMDLHDEHFGYQKITVLGIEGYHDFQPHLLAENLIQHPQFTHCSITTALLHLPELDQLRLTSREFRSVNISQLLEHRLAFRELVQEIKQASGDGEAIFLPACFGLDNQDFFNKLTLETGLNLYELPTLPPSLVGLRQHKKLKTYFEKLGGFILNGDKALRAVIEDQQVKQIYTQLHQEHGIFAEHFVLASGSFFSNGLVSVFDRLLEPIFDVDMIGNSMIDIQNRLTWTARRFSSPQPYQSAGVAINSRCQLKKSGQIIKNLYAAGNVIGGYNALELGCGSGVAVVTALTAADNIIEAQNRV.

The protein belongs to the anaerobic G-3-P dehydrogenase subunit B family. As to quaternary structure, composed of a catalytic GlpA/B dimer and of membrane bound GlpC. The cofactor is FMN.

The catalysed reaction is a quinone + sn-glycerol 3-phosphate = dihydroxyacetone phosphate + a quinol. Its pathway is polyol metabolism; glycerol degradation via glycerol kinase pathway; glycerone phosphate from sn-glycerol 3-phosphate (anaerobic route): step 1/1. Its function is as follows. Conversion of glycerol 3-phosphate to dihydroxyacetone. Uses fumarate or nitrate as electron acceptor. The polypeptide is Anaerobic glycerol-3-phosphate dehydrogenase subunit B (Histophilus somni (strain 2336) (Haemophilus somnus)).